The following is a 349-amino-acid chain: GTPase Obg (349 aa).

An Obg domain is found at 1-159; sequence MKFLDEAKVY…RWIWLRLKLI (159 aa). In terms of domain architecture, OBG-type G spans 160 to 327; that stretch reads ADAGLVGLPN…ALRALVEVIG (168 aa). GTP is bound by residues 166–173, 191–195, 212–215, 279–282, and 308–310; these read GLPNAGKS, FTTLH, DIPG, NKID, and SGV. Mg(2+) contacts are provided by S173 and T193.

Belongs to the TRAFAC class OBG-HflX-like GTPase superfamily. OBG GTPase family. In terms of assembly, monomer. Mg(2+) is required as a cofactor.

It is found in the cytoplasm. In terms of biological role, an essential GTPase which binds GTP, GDP and possibly (p)ppGpp with moderate affinity, with high nucleotide exchange rates and a fairly low GTP hydrolysis rate. Plays a role in control of the cell cycle, stress response, ribosome biogenesis and in those bacteria that undergo differentiation, in morphogenesis control. The polypeptide is GTPase Obg (Rhodopseudomonas palustris (strain BisB18)).